A 357-amino-acid chain; its full sequence is Phosphoribosylformylglycinamidine cyclo-ligase (357 aa).

The protein belongs to the AIR synthase family.

The protein localises to the cytoplasm. The catalysed reaction is 2-formamido-N(1)-(5-O-phospho-beta-D-ribosyl)acetamidine + ATP = 5-amino-1-(5-phospho-beta-D-ribosyl)imidazole + ADP + phosphate + H(+). It functions in the pathway purine metabolism; IMP biosynthesis via de novo pathway; 5-amino-1-(5-phospho-D-ribosyl)imidazole from N(2)-formyl-N(1)-(5-phospho-D-ribosyl)glycinamide: step 2/2. The polypeptide is Phosphoribosylformylglycinamidine cyclo-ligase (Allorhizobium ampelinum (strain ATCC BAA-846 / DSM 112012 / S4) (Agrobacterium vitis (strain S4))).